Reading from the N-terminus, the 365-residue chain is Class I histocompatibility antigen, B alpha chain (365 aa).

The signal sequence occupies residues M1 to A24. Positions G25–A114 are alpha-1. At G25 to I308 the chain is on the extracellular side. An N-linked (GlcNAc...) asparagine glycan is attached at N110. Residues G115–A206 are alpha-2. 2 disulfides stabilise this stretch: C125-C188 and C227-C283. The alpha-3 stretch occupies residues E207 to W298. The Ig-like C1-type domain maps to P209–R297. Residues E299 to I308 are connecting peptide. The helical transmembrane segment at M309–W332 threads the bilayer. The Cytoplasmic portion of the chain corresponds to R333–V365. The disordered stretch occupies residues S337 to T361. Over residues Q346–S359 the composition is skewed to polar residues. Phosphoserine occurs at positions 356 and 359.

Belongs to the MHC class I family. As to quaternary structure, heterodimer of an alpha chain and a beta chain (beta-2-microglobulin).

Its subcellular location is the membrane. Involved in the presentation of foreign antigens to the immune system. The chain is Class I histocompatibility antigen, B alpha chain from Saguinus oedipus (Cotton-top tamarin).